The following is an 843-amino-acid chain: Leucine--tRNA ligase (843 aa).

Positions 61–71 match the 'HIGH' region motif; the sequence is PYPSGDLHMGH. The 'KMSKS' region signature appears at 606-610; it reads AMSKS. Lysine 609 lines the ATP pocket.

The protein belongs to the class-I aminoacyl-tRNA synthetase family.

The protein resides in the cytoplasm. It carries out the reaction tRNA(Leu) + L-leucine + ATP = L-leucyl-tRNA(Leu) + AMP + diphosphate. This is Leucine--tRNA ligase from Arthrobacter sp. (strain FB24).